Consider the following 149-residue polypeptide: Succinate dehydrogenase assembly factor 2, mitochondrial (149 aa).

It belongs to the SDHAF2 family. In terms of assembly, interacts with the flavoprotein subunit within the SDH catalytic dimer.

The protein resides in the mitochondrion matrix. In terms of biological role, plays an essential role in the assembly of succinate dehydrogenase (SDH), an enzyme complex (also referred to as respiratory complex II) that is a component of both the tricarboxylic acid (TCA) cycle and the mitochondrial electron transport chain, and which couples the oxidation of succinate to fumarate with the reduction of ubiquinone (coenzyme Q) to ubiquinol. Required for flavinylation (covalent attachment of FAD) of the flavoprotein subunit of the SDH catalytic dimer. In Scheffersomyces stipitis (strain ATCC 58785 / CBS 6054 / NBRC 10063 / NRRL Y-11545) (Yeast), this protein is Succinate dehydrogenase assembly factor 2, mitochondrial.